The following is a 307-amino-acid chain: GTPase Era (307 aa).

Residues 13 to 180 form the Era-type G domain; it reads RCGFVALIGA…RRALAEMVPP (168 aa). The tract at residues 21–28 is G1; it reads GAPNVGKS. 21–28 provides a ligand contact to GTP; that stretch reads GAPNVGKS. The G2 stretch occupies residues 47–51; the sequence is QTTRA. The tract at residues 68-71 is G3; that stretch reads DTPG. GTP is bound by residues 68–72 and 130–133; these read DTPGI and NKVD. Positions 130–133 are G4; the sequence is NKVD. Residues 159-161 form a G5 region; it reads ISA. Residues 211 to 288 enclose the KH type-2 domain; the sequence is LHQELPYQST…HLFLFVKVRE (78 aa).

This sequence belongs to the TRAFAC class TrmE-Era-EngA-EngB-Septin-like GTPase superfamily. Era GTPase family. As to quaternary structure, monomer.

It is found in the cytoplasm. The protein localises to the cell inner membrane. In terms of biological role, an essential GTPase that binds both GDP and GTP, with rapid nucleotide exchange. Plays a role in 16S rRNA processing and 30S ribosomal subunit biogenesis and possibly also in cell cycle regulation and energy metabolism. This Bradyrhizobium sp. (strain ORS 278) protein is GTPase Era.